Consider the following 240-residue polypeptide: Myomodulin neuropeptides 2 (240 aa).

A signal peptide spans 1–23 (MWKILETCSCFLVVAVLSGLGKA). Residues 23–44 (AQPESFSGSAVTDDSTSGANKR) form a disordered region. Residues 24–44 (QPESFSGSAVTDDSTSGANKR) constitute a propeptide that is removed on maturation. The segment covering 26–41 (ESFSGSAVTDDSTSGA) has biased composition (polar residues). A leucine amide mark is found at Leu-51 and Leu-60. 2 propeptides (connecting peptide) span residues 72–81 (SGHQVPMLRA) and 84–112 (GSPDTSGRLDANELYAVLSAILDEPRDQS). At Ala-81 the chain carries Alanine amide. Gln-115 bears the Pyrrolidone carboxylic acid mark. Tyr-121 carries the tyrosine amide modification. Propeptides (connecting peptide) lie at residues 124 to 147 (DNNGVARDLLDALASDGESSSNFD), 124 to 148 (DNNGVARDLLDALASDGESSSNFDL), 124 to 149 (DNNGVARDLLDALASDGESSSNFDLL), 124 to 168 (DNNG…GGRY), 131 to 168 (DLLDALASDGESSSNFDLLSSLNNGPSYFRPAPRGGRY), 149 to 168 (LSSLNNGPSYFRPAPRGGRY), 150 to 168 (SSLNNGPSYFRPAPRGGRY), 151 to 168 (SLNNGPSYFRPAPRGGRY), 171 to 190 (SLPDAGPADYPSLEDYLVQS), and 171 to 199 (SLPDAGPADYPSLEDYLVQSRQFARPYSS). Ile-207 is modified (isoleucine amide). Residues 210 to 219 (FSGSPRLQAK) constitute a propeptide that is removed on maturation. A disordered region spans residues 212–240 (GSPRLQAKAVPRPRIGRQESQMREAKSAE). Ile-226 bears the Isoleucine amide mark. Residues 227–240 (GRQESQMREAKSAE) constitute a propeptide that is removed on maturation. A compositionally biased stretch (basic and acidic residues) spans 227 to 240 (GRQESQMREAKSAE).

As to expression, expressed in the pedal-buccal projection neurons in the pedal ganglion.

Its subcellular location is the secreted. Functionally, MMG2-DPs (Myomodulin gene 2-derived peptides) bias egestive feeding programs toward ingestive ones, and modulate accessory radula closer (ARC) muscle contractions. The polypeptide is Myomodulin neuropeptides 2 (MMG2) (Aplysia californica (California sea hare)).